A 383-amino-acid chain; its full sequence is Adaptive-response sensory kinase SasA (383 aa).

One can recognise a Histidine kinase domain in the interval 152-365; it reads MVAHELRTPL…CFTFTVPIWQ (214 aa). Residue His155 is modified to Phosphohistidine; by autocatalysis.

As to quaternary structure, homooligomerizes. Interacts with KaiC. Participates in the KaiABC clock complex, whose core is composed of a KaiC homohexamer, 6 KaiB and up to 6 KaiA dimers. SasA and KaiB(fs) compete to bind to KaiC.

It catalyses the reaction ATP + protein L-histidine = ADP + protein N-phospho-L-histidine.. Member of the two-component regulatory system SasA/RpaA involved in genome-wide circadian gene expression. One of several clock output pathways. Participates in the Kai clock protein complex, the main circadian regulator in cyanobacteria, via its interaction with KaiC. KaiC enhances the autophosphorylation activity of SasA, which then transfers its phosphate group to RpaA to activate it. In addition to its output function, recruits fold-shifted KaiB (KaiB(fs)) to KaiC to cooperatively form the KaiB(6):KaiC(6) complex (independent of SasA kinase activity). Required for robustness of the circadian rhythm of gene expression and is involved in clock output, also required for adaptation to light/dark cycles. This Synechococcus sp. (strain CC9902) protein is Adaptive-response sensory kinase SasA.